Here is a 421-residue protein sequence, read N- to C-terminus: Granaticin polyketide putative beta-ketoacyl synthase 1 (421 aa).

In terms of domain architecture, Ketosynthase family 3 (KS3) spans T2–R416. Active-site for beta-ketoacyl synthase activity residues include C169, H309, and H346.

The protein belongs to the thiolase-like superfamily. Beta-ketoacyl-ACP synthases family.

The protein operates within antibiotic biosynthesis; granaticin biosynthesis. The protein is Granaticin polyketide putative beta-ketoacyl synthase 1 (gra-orf1) of Streptomyces violaceoruber.